A 157-amino-acid chain; its full sequence is Probable Brix domain-containing ribosomal biogenesis protein (157 aa).

Residues 1–157 (MLVTTSRKPS…KFNIKGFKKY (157 aa)) enclose the Brix domain.

In terms of biological role, probably involved in the biogenesis of the ribosome. The chain is Probable Brix domain-containing ribosomal biogenesis protein from Methanosarcina mazei (strain ATCC BAA-159 / DSM 3647 / Goe1 / Go1 / JCM 11833 / OCM 88) (Methanosarcina frisia).